Consider the following 336-residue polypeptide: MSFFGFGQSVEVEILLNDAESRKRAEHKTEDGKKEKYFLFYDGETVSGKVSLALKNPNKRLEHQGIKIEFIGQIELYYDRGNHHEFVSLVKDLARPGEITQSQAFDFEFTHVEKPYESYTGQNVKLRYFLRATISRRLNDVVKEMDIVVHTLSTYPELNSSIKMEVGIEDCLHIEFEYNKSKYHLKDVIVGKIYFLLVRIKIKHMEIDIIKRETTGTGPNVYHENDTIAKYEIMDGAPVRGESIPIRLFLAGYELTPTMRDINKKFSVRYYLNLVLIDEEERRYFKQQEVVLWRKGDIVRKSMSHQAAIASQRFEGTTSLGEVRTPSQLSDNNCRQ.

3 positions are modified to phosphoserine: serine 302, serine 304, and serine 319.

This sequence belongs to the VPS26 family. Component of the heterotrimeric retromer cargo-selective complex (CSC), also described as vacuolar protein sorting VPS subcomplex (VPS,) formed by VPS26 (VPS26A or VPS26B), VPS29 and VPS35. The CSC has a highly elongated structure with VPS26 and VPS29 binding independently at opposite distal ends of VPS35 as central platform. The CSC is believed to associate with variable sorting nexins to form functionally distinct retromer complex variants. The originally described retromer complex (also called SNX-BAR retromer) is a pentamer containing the CSC and a heterodimeric membrane-deforming subcomplex formed between SNX1 or SNX2 and SNX5 or SNX6 (also called SNX-BAR subcomplex); the respective CSC and SNX-BAR subcomplexes associate with low affinity. The CSC associates with SNX3 to form a SNX3-retromer complex. The CSC associates with SNX27, the WASH complex and the SNX-BAR subcomplex to form the SNX27-retromer complex. Interacts with VPS29, VPS35, TBC1D5, GOLPH3, SNX27.

It localises to the cytoplasm. The protein localises to the membrane. Its subcellular location is the early endosome. It is found in the late endosome. Functionally, acts as a component of the retromer cargo-selective complex (CSC). The CSC is believed to be the core functional component of retromer or respective retromer complex variants acting to prevent missorting of selected transmembrane cargo proteins into the lysosomal degradation pathway. The recruitment of the CSC to the endosomal membrane involves RAB7A and SNX3. The SNX-BAR retromer mediates retrograde transport of cargo proteins from endosomes to the trans-Golgi network (TGN) and is involved in endosome-to-plasma membrane transport for cargo protein recycling. The SNX3-retromer mediates the retrograde transport of WLS distinct from the SNX-BAR retromer pathway. The SNX27-retromer is believed to be involved in endosome-to-plasma membrane trafficking and recycling of a broad spectrum of cargo proteins. The CSC seems to act as recruitment hub for other proteins, such as the WASH complex and TBC1D5. May be involved in retrograde transport of SORT1 but not of IGF2R. Acts redundantly with VSP26A in SNX-27 mediated endocytic recycling of SLC2A1/GLUT1. This is Vacuolar protein sorting-associated protein 26B (VPS26B) from Homo sapiens (Human).